We begin with the raw amino-acid sequence, 920 residues long: 3-hydroxy-3-methylglutaryl-coenzyme A reductase (920 aa).

The chain crosses the membrane as a helical span at residues 12–32; that stretch reads FCASHPWEVIVALLTITACML. N-linked (GlcNAc...) asparagine glycosylation is present at asparagine 37. Residues 62-85 are disordered; that stretch reads GAGSGASGTIPPSSMGGSATSSRH. Over residues 71–82 the composition is skewed to polar residues; it reads IPPSSMGGSATS. One can recognise an SSD domain in the interval 106-263; it reads DVILMTIVRC…MTFYPACLSL (158 aa). 5 helical membrane-spanning segments follow: residues 107–129, 136–156, 170–190, 208–228, and 237–257; these read VILM…CSLH, VLGI…TAII, LFFL…QLAL, LLGP…GVGT, and VLCM…MTFY. Residues asparagine 342 and asparagine 346 are each glycosylated (N-linked (GlcNAc...) asparagine). A helical membrane pass occupies residues 364–384; it reads SADHIVISIVLIALVVKFICF. The segment at 385 to 498 is linker; the sequence is DNRDPLPDQL…EEIVSIVHAG (114 aa). Asparagine 443 and asparagine 475 each carry an N-linked (GlcNAc...) asparagine glycan. The segment at 499-829 is catalytic; the sequence is GTHCPLHKIE…TCTMPSLEVG (331 aa). Residues glutamate 586, lysine 717, and aspartate 793 each act as charge relay system in the active site. N-linked (GlcNAc...) asparagine glycosylation is found at asparagine 797 and asparagine 802. The active-site Proton donor is histidine 892. 2 N-linked (GlcNAc...) asparagine glycosylation sites follow: asparagine 896 and asparagine 910.

The protein belongs to the HMG-CoA reductase family. Highly expressed in embryonic gonadal mesoderm, where expression is initially broad, and then becomes restricted to a segmental pattern at stage 11. Expression is then further restricted to a cluster of cells in each of parasegments 10, 11 and 12, corresponding to the developing gonadal mesoderm. Not expressed in pole cells.

The protein localises to the endoplasmic reticulum membrane. It carries out the reaction (R)-mevalonate + 2 NADP(+) + CoA = (3S)-3-hydroxy-3-methylglutaryl-CoA + 2 NADPH + 2 H(+). The protein operates within metabolic intermediate biosynthesis; (R)-mevalonate biosynthesis; (R)-mevalonate from acetyl-CoA: step 3/3. Its activity is regulated as follows. The activity of HMG-CoA-reductase is suppressed by exogenous mevalonate. In terms of biological role, synthesis of mevalonate for the production of non-sterol isoprenoids, which are essential for growth differentiation. Provides spatial information during embryogenesis to guide migrating primordial germ cells (the pole cells) from the ectoderm to the mesoderm. Also required for association of the pole cells with the gonadal mesoderm. The sequence is that of 3-hydroxy-3-methylglutaryl-coenzyme A reductase (Hmgcr) from Drosophila melanogaster (Fruit fly).